The sequence spans 965 residues: Pullulanase 1, chloroplastic (965 aa).

Residues Met-1–Ser-62 constitute a chloroplast transit peptide. Asp-552 acts as the Nucleophile in catalysis. The Proton donor role is filled by Glu-589.

Belongs to the glycosyl hydrolase 13 family.

The protein resides in the plastid. It is found in the chloroplast stroma. It catalyses the reaction Hydrolysis of (1-&gt;6)-alpha-D-glucosidic linkages in alpha- and beta-limit dextrins of amylopectin and glycogen, and in amylopectin and pullulan.. It functions in the pathway glycan biosynthesis; starch biosynthesis. It participates in glycan degradation; starch degradation. Involved in starch degradation and also probably in the trimming of pre-amylopectin chains during starch synthesis. The sequence is that of Pullulanase 1, chloroplastic (PU1) from Arabidopsis thaliana (Mouse-ear cress).